Consider the following 339-residue polypeptide: Ketol-acid reductoisomerase (NADP(+)) (339 aa).

The region spanning 1–182 (MRVYYDRDAD…GGGRSGIIET (182 aa)) is the KARI N-terminal Rossmann domain. NADP(+)-binding positions include 24-27 (YGSQ), Lys-48, Ser-51, Thr-53, and 83-86 (DELQ). Residue His-108 is part of the active site. Gly-134 serves as a coordination point for NADP(+). The region spanning 183–328 (NFKEECETDL…AKLRGMMPWI (146 aa)) is the KARI C-terminal knotted domain. Mg(2+) contacts are provided by Asp-191, Glu-195, Glu-227, and Glu-231. Ser-252 is a binding site for substrate.

This sequence belongs to the ketol-acid reductoisomerase family. Mg(2+) is required as a cofactor.

It carries out the reaction (2R)-2,3-dihydroxy-3-methylbutanoate + NADP(+) = (2S)-2-acetolactate + NADPH + H(+). It catalyses the reaction (2R,3R)-2,3-dihydroxy-3-methylpentanoate + NADP(+) = (S)-2-ethyl-2-hydroxy-3-oxobutanoate + NADPH + H(+). It participates in amino-acid biosynthesis; L-isoleucine biosynthesis; L-isoleucine from 2-oxobutanoate: step 2/4. The protein operates within amino-acid biosynthesis; L-valine biosynthesis; L-valine from pyruvate: step 2/4. Functionally, involved in the biosynthesis of branched-chain amino acids (BCAA). Catalyzes an alkyl-migration followed by a ketol-acid reduction of (S)-2-acetolactate (S2AL) to yield (R)-2,3-dihydroxy-isovalerate. In the isomerase reaction, S2AL is rearranged via a Mg-dependent methyl migration to produce 3-hydroxy-3-methyl-2-ketobutyrate (HMKB). In the reductase reaction, this 2-ketoacid undergoes a metal-dependent reduction by NADPH to yield (R)-2,3-dihydroxy-isovalerate. The chain is Ketol-acid reductoisomerase (NADP(+)) from Sinorhizobium medicae (strain WSM419) (Ensifer medicae).